Here is a 132-residue protein sequence, read N- to C-terminus: MRDSVLSVIFALALFLECYTPSMAIPMGKMEDTALEQDTLDSLLNESVADKNPDSVRSGSSKIIVLADSGMWKNLNRGLPLYKLKAAAAGLDRALTLDRREADQDLSPSISIVRRDTMRCMVGRVYRPCWEV.

Positions 1–24 (MRDSVLSVIFALALFLECYTPSMA) are cleaved as a signal peptide. The cysteines at positions 120 and 129 are disulfide-linked.

It belongs to the MCH family. In terms of tissue distribution, pituitary gland. Produced in neurons of lateral basal hypothalamus which project both to the brain and to the neural lobe of the pituitary gland from where MCH is released.

Functionally, plays a role in skin pigmentation by antagonizing the action of melanotropin alpha. Induces melanin concentration within the melanophores. May participate in the control of the hypothalamo-pituitary adrenal gland axis by inhibiting the release of ACTH. The protein is Pro-MCH 1 (mch1) of Oncorhynchus kisutch (Coho salmon).